We begin with the raw amino-acid sequence, 461 residues long: B3 domain-containing protein REM9 (461 aa).

The segment at residues 11–103 (NQHFFQPLLP…VFHVTALGPS (93 aa)) is a DNA-binding region (TF-B3 1). Residues 110–146 (PQSSRHEEGEESGENEISEKEGEENVQKESDKSSSDL) are disordered. The segment covering 126-143 (ISEKEGEENVQKESDKSS) has biased composition (basic and acidic residues). 2 consecutive DNA-binding regions (TF-B3) follow at residues 148–244 (CFSQ…CSRT) and 230–332 (LQKA…EQPS). Positions 333–415 (FKAEDGRHKR…SGIEGNLQHT (83 aa)) are disordered. Basic and acidic residues predominate over residues 384–394 (PKVEIREKIAE). Polar residues predominate over residues 400–415 (RASNKSSGIEGNLQHT).

It is found in the nucleus. The sequence is that of B3 domain-containing protein REM9 (REM9) from Arabidopsis thaliana (Mouse-ear cress).